The primary structure comprises 462 residues: Putative zinc metalloprotease RSc1411 (462 aa).

The chain crosses the membrane as a helical span at residues 1-21 (MLTVLAFVFAIAVLIVVHELG). Histidine 18 provides a ligand contact to Zn(2+). Glutamate 19 is an active-site residue. Residue histidine 22 participates in Zn(2+) binding. The helical transmembrane segment at 102-124 (FAIVAAGPVFNFLLAIALYALLA) threads the bilayer. One can recognise a PDZ domain in the interval 201 to 283 (TVRLRELPSA…MPEQNASIDI (83 aa)). 2 consecutive transmembrane segments (helical) span residues 386-406 (FVAF…LPVP) and 430-450 (WQAV…SLAL).

It belongs to the peptidase M50B family. Zn(2+) is required as a cofactor.

The protein resides in the cell inner membrane. This chain is Putative zinc metalloprotease RSc1411, found in Ralstonia nicotianae (strain ATCC BAA-1114 / GMI1000) (Ralstonia solanacearum).